A 677-amino-acid chain; its full sequence is Pentatricopeptide repeat-containing protein At5g39350 (677 aa).

PPR repeat units follow at residues 48-78 (SGHILSTLSVTYALCGHITYARKLFEEMPQS), 79-113 (SLLSYNIVIRMYVREGLYHDAISVFIRMVSEGVKC), 116-146 (DGYTYPFVAKAAGELKSMKLGLVVHGRILRS), 151-181 (DKYVQNALLAMYMNFGKVEMARDVFDVMKNR), 182-216 (DVISWNTMISGYYRNGYMNDALMMFDWMVNESVDL), 217-251 (DHATIVSMLPVCGHLKDLEMGRNVHKLVEEKRLGD), 252-282 (KIEVKNALVNMYLKCGRMDEARFVFDRMERR), 283-317 (DVITWTCMINGYTEDGDVENALELCRLMQFEGVRP), 318-352 (NAVTIASLVSVCGDALKVNDGKCLHGWAVRQQVYS), 353-383 (DIIIETSLISMYAKCKRVDLCFRVFSGASKY), 384-418 (HTGPWSAIIAGCVQNELVSDALGLFKRMRREDVEP), 419-453 (NIATLNSLLPAYAALADLRQAMNIHCYLTKTGFMS), 454-488 (SLDAATGLVHVYSKCGTLESAHKIFNGIQEKHKSK), 489-523 (DVVLWGALISGYGMHGDGHNALQVFMEMVRSGVTP), 524-554 (NEITFTSALNACSHSGLVEEGLTLFRFMLEH), and 560-590 (RSNHYTCIVDLLGRAGRLDEAYNLITTIPFE). The tract at residues 595–670 (VWGALLAACV…KPGHSTIEIR (76 aa)) is type E motif.

Belongs to the PPR family. PCMP-E subfamily.

This chain is Pentatricopeptide repeat-containing protein At5g39350 (PCMP-E16), found in Arabidopsis thaliana (Mouse-ear cress).